The following is a 154-amino-acid chain: Ribosomal RNA large subunit methyltransferase H (154 aa).

S-adenosyl-L-methionine-binding residues include L71 and G103.

This sequence belongs to the RNA methyltransferase RlmH family. As to quaternary structure, homodimer.

It is found in the cytoplasm. It catalyses the reaction pseudouridine(1915) in 23S rRNA + S-adenosyl-L-methionine = N(3)-methylpseudouridine(1915) in 23S rRNA + S-adenosyl-L-homocysteine + H(+). Its function is as follows. Specifically methylates the pseudouridine at position 1915 (m3Psi1915) in 23S rRNA. The protein is Ribosomal RNA large subunit methyltransferase H of Solidesulfovibrio magneticus (strain ATCC 700980 / DSM 13731 / RS-1) (Desulfovibrio magneticus).